Consider the following 428-residue polypeptide: MANVTVVGAQWGDEGKGKIVDWLSNRADVVVRFQGGHNAGHTLVVDGKVYKLALLPSGVVQGKLSVIGNGVVVDPWHLLSEIDKIADQGVAITPDLLILADNACLILPLHRDLDQAREAASTQKIGTTGRGIGPAYEDKVGRRAIRVADLADPEALKPKIERLLAHHGALRRGLGLPEANAQELFDALMELAPRILSYAQPAWRVLDQAYKAGRRILFEGAQGSLLDVDHGTYPFVTSSNTAAGQASAGSGMGPSATGFVLGIVKAYTTRVGEGPFPAELFDEVGKHLSTVGREVGVNTGRARRCGWFDSVLVRQSVAINGIHGVALTKLDVLDGLKTLKICVGYKIGDKVVDYLPAGLRDQAAATPVYEEIEGWTESTAGARSFKDLNANAIKYVRRVEELIGAPVALLSTSPERDDTILMRDPFQG.

Residues 12–18 and 40–42 contribute to the GTP site; these read GDEGKGK and GHT. The Proton acceptor role is filled by Asp13. Mg(2+) is bound by residues Asp13 and Gly40. IMP is bound by residues 13 to 16, 38 to 41, Thr128, Arg142, Gln222, Thr237, and Arg301; these read DEGK and NAGH. His41 serves as the catalytic Proton donor. 297–303 provides a ligand contact to substrate; that stretch reads VNTGRAR. GTP-binding positions include Arg303, 329–331, and 411–413; these read KLD and STS.

Belongs to the adenylosuccinate synthetase family. As to quaternary structure, homodimer. The cofactor is Mg(2+).

The protein resides in the cytoplasm. It carries out the reaction IMP + L-aspartate + GTP = N(6)-(1,2-dicarboxyethyl)-AMP + GDP + phosphate + 2 H(+). The protein operates within purine metabolism; AMP biosynthesis via de novo pathway; AMP from IMP: step 1/2. In terms of biological role, plays an important role in the de novo pathway of purine nucleotide biosynthesis. Catalyzes the first committed step in the biosynthesis of AMP from IMP. This Caulobacter vibrioides (strain ATCC 19089 / CIP 103742 / CB 15) (Caulobacter crescentus) protein is Adenylosuccinate synthetase.